Here is a 672-residue protein sequence, read N- to C-terminus: Threonine--tRNA ligase (672 aa).

The 59-residue stretch at 2 to 60 (SEPKNILLTVDGELREVTHGTTGLDLFREKPTTAVMRVDGLLWDLAREIPAGASVESVD) folds into the TGS domain. The catalytic stretch occupies residues 260-567 (DHRKLGAELD…LTEHYAGAFP (308 aa)). Zn(2+) is bound by residues Cys366, His417, and His544.

The protein belongs to the class-II aminoacyl-tRNA synthetase family. Homodimer. It depends on Zn(2+) as a cofactor.

Its subcellular location is the cytoplasm. It catalyses the reaction tRNA(Thr) + L-threonine + ATP = L-threonyl-tRNA(Thr) + AMP + diphosphate + H(+). Catalyzes the attachment of threonine to tRNA(Thr) in a two-step reaction: L-threonine is first activated by ATP to form Thr-AMP and then transferred to the acceptor end of tRNA(Thr). Also edits incorrectly charged L-seryl-tRNA(Thr). The protein is Threonine--tRNA ligase of Micrococcus luteus (strain ATCC 4698 / DSM 20030 / JCM 1464 / CCM 169 / CCUG 5858 / IAM 1056 / NBRC 3333 / NCIMB 9278 / NCTC 2665 / VKM Ac-2230) (Micrococcus lysodeikticus).